A 339-amino-acid polypeptide reads, in one-letter code: Ketol-acid reductoisomerase (NADP(+)) (339 aa).

A KARI N-terminal Rossmann domain is found at 1 to 182 (MRVYYDRDAD…GGGRAGIIET (182 aa)). NADP(+)-binding positions include 24-27 (YGSQ), Arg48, Ser51, Ser53, and 83-86 (DELQ). His108 is an active-site residue. Gly134 is an NADP(+) binding site. Positions 183 to 328 (TFREECETDL…AKLRDMMPWI (146 aa)) constitute a KARI C-terminal knotted domain. 4 residues coordinate Mg(2+): Asp191, Glu195, Glu227, and Glu231. Ser252 lines the substrate pocket.

The protein belongs to the ketol-acid reductoisomerase family. The cofactor is Mg(2+).

It catalyses the reaction (2R)-2,3-dihydroxy-3-methylbutanoate + NADP(+) = (2S)-2-acetolactate + NADPH + H(+). The catalysed reaction is (2R,3R)-2,3-dihydroxy-3-methylpentanoate + NADP(+) = (S)-2-ethyl-2-hydroxy-3-oxobutanoate + NADPH + H(+). It functions in the pathway amino-acid biosynthesis; L-isoleucine biosynthesis; L-isoleucine from 2-oxobutanoate: step 2/4. It participates in amino-acid biosynthesis; L-valine biosynthesis; L-valine from pyruvate: step 2/4. In terms of biological role, involved in the biosynthesis of branched-chain amino acids (BCAA). Catalyzes an alkyl-migration followed by a ketol-acid reduction of (S)-2-acetolactate (S2AL) to yield (R)-2,3-dihydroxy-isovalerate. In the isomerase reaction, S2AL is rearranged via a Mg-dependent methyl migration to produce 3-hydroxy-3-methyl-2-ketobutyrate (HMKB). In the reductase reaction, this 2-ketoacid undergoes a metal-dependent reduction by NADPH to yield (R)-2,3-dihydroxy-isovalerate. This chain is Ketol-acid reductoisomerase (NADP(+)), found in Rhodopseudomonas palustris (strain ATCC BAA-98 / CGA009).